Here is a 72-residue protein sequence, read N- to C-terminus: Large ribosomal subunit protein bL31 (72 aa).

Positions 16, 18, 38, and 41 each coordinate Zn(2+).

It belongs to the bacterial ribosomal protein bL31 family. Type A subfamily. In terms of assembly, part of the 50S ribosomal subunit. Zn(2+) serves as cofactor.

Binds the 23S rRNA. This is Large ribosomal subunit protein bL31 from Aliivibrio salmonicida (strain LFI1238) (Vibrio salmonicida (strain LFI1238)).